The sequence spans 373 residues: NADPH-dependent 3-keto-steroid reductase Hsd3b5 (373 aa).

Residues 10–15 (GAGGFL), Tyr-155, and Lys-159 each bind NADP(+). The Proton donor role is filled by Lys-159. The helical transmembrane segment at 288 to 308 (LPLLYWLAFLLETVSFLLRPF) threads the bilayer. Position 350 is an N6-acetyllysine (Lys-350).

This sequence belongs to the 3-beta-HSD family. Expressed predominantly in male liver.

It is found in the endoplasmic reticulum membrane. The protein resides in the mitochondrion membrane. It carries out the reaction a 3beta-hydroxysteroid + NADP(+) = a 3-oxosteroid + NADPH + H(+). It catalyses the reaction 5alpha-androstane-3beta,17beta-diol + NADP(+) = 17beta-hydroxy-5alpha-androstan-3-one + NADPH + H(+). The catalysed reaction is 3beta-hydroxy-5alpha-androstan-17-one + NADP(+) = 5alpha-androstan-3,17-dione + NADPH + H(+). The protein operates within steroid metabolism. Its function is as follows. Responsible for the reduction of the oxo group on the C-3 of 5alpha-androstane steroids. Catalyzes the conversion of dihydrotestosterone to its inactive form 5alpha-androstanediol, that does not bind androgen receptor/AR. Also converts androstanedione, a precursor of testosterone and estrone, to epiandrosterone. Does not function as an isomerase. This Rattus norvegicus (Rat) protein is NADPH-dependent 3-keto-steroid reductase Hsd3b5.